The following is a 291-amino-acid chain: ATP phosphoribosyltransferase (291 aa).

Belongs to the ATP phosphoribosyltransferase family. Long subfamily. Mg(2+) serves as cofactor.

The protein resides in the cytoplasm. The catalysed reaction is 1-(5-phospho-beta-D-ribosyl)-ATP + diphosphate = 5-phospho-alpha-D-ribose 1-diphosphate + ATP. It functions in the pathway amino-acid biosynthesis; L-histidine biosynthesis; L-histidine from 5-phospho-alpha-D-ribose 1-diphosphate: step 1/9. Feedback inhibited by histidine. Catalyzes the condensation of ATP and 5-phosphoribose 1-diphosphate to form N'-(5'-phosphoribosyl)-ATP (PR-ATP). Has a crucial role in the pathway because the rate of histidine biosynthesis seems to be controlled primarily by regulation of HisG enzymatic activity. The sequence is that of ATP phosphoribosyltransferase from Trichlorobacter lovleyi (strain ATCC BAA-1151 / DSM 17278 / SZ) (Geobacter lovleyi).